We begin with the raw amino-acid sequence, 490 residues long: Protein twist (490 aa).

3 disordered regions span residues 48–72, 96–165, and 244–264; these read QLQHQQQHLHSHQHHQQHHQQQHAQ, PSNE…TGGS, and QQQQSQQLQQQQPHQQSHAQM. Residues 54–68 are compositionally biased toward basic residues; sequence QHLHSHQHHQQHHQQ. Low complexity-rich tracts occupy residues 102 to 134 and 244 to 263; these read STSSNQSAQSTSLELNNNNTSSNTNSSGNNPSG and QQQQSQQLQQQQPHQQSHAQ. Serine 325 and serine 328 each carry phosphoserine. The interval 330-361 is disordered; that stretch reads LDGSDAGGKAFRKPRRRLKRKPSKTEETDEFS. Residues 339-351 are compositionally biased toward basic residues; it reads AFRKPRRRLKRKP. Positions 362-413 constitute a bHLH domain; sequence NQRVMANVRERQRTQSLNDAFKSLQQIIPTLPSDKLSKIQTLKLATRYIDFL.

In terms of assembly, efficient DNA binding requires dimerization with another bHLH protein. Homodimer. Interacts with akirin. In terms of tissue distribution, expressed in embryonic abdomen; a single cell ventrally, pairs of cells laterally and three cells dorsally in each hemisegment. In the thorax, there are patches of cells associated with the imaginal disks. During larval development, cells proliferate and, in the abdomen, they form ventral, lateral and dorsal clusters, which are the precursors of the adult abdominal muscles. In the thorax, they form populations of cells in the imaginal disks that correspond to the adepithelial cells.

Its subcellular location is the nucleus. In terms of biological role, involved in the establishment and dorsoventral patterning of germ layers in the embryo. The protein is Protein twist (twi) of Drosophila melanogaster (Fruit fly).